We begin with the raw amino-acid sequence, 325 residues long: Flavin-dependent thymidylate synthase (325 aa).

One can recognise a ThyX domain in the interval 12-267; that stretch reads ISVRLLEYTG…PRLFRWAGPS (256 aa). Residues Ser-65, 89–91, and Gln-97 each bind FAD; that span reads RHR. Residues 86–89 and 97–101 contribute to the dUMP site; these read QLVR and QLSHR. Positions 89–99 match the ThyX motif motif; it reads RHRVASYTQLS. Positions 110 to 159 are insert; that stretch reads AALKACESIGLDCPSKPAETEGGRKAAYRLYSQALERAARDFGASERFAI. Arg-205 is a dUMP binding site. Residue 221 to 223 participates in FAD binding; the sequence is NAR. DUMP is bound at residue Arg-233. Arg-233 acts as the Involved in ionization of N3 of dUMP, leading to its activation in catalysis.

Belongs to the thymidylate synthase ThyX family. As to quaternary structure, homotetramer. FAD is required as a cofactor.

The enzyme catalyses dUMP + (6R)-5,10-methylene-5,6,7,8-tetrahydrofolate + NADPH + H(+) = dTMP + (6S)-5,6,7,8-tetrahydrofolate + NADP(+). Its pathway is pyrimidine metabolism; dTTP biosynthesis. Its function is as follows. Catalyzes the reductive methylation of 2'-deoxyuridine-5'-monophosphate (dUMP) to 2'-deoxythymidine-5'-monophosphate (dTMP) while utilizing 5,10-methylenetetrahydrofolate (mTHF) as the methyl donor, and NADPH and FADH(2) as the reductant. The polypeptide is Flavin-dependent thymidylate synthase (Aeropyrum pernix (strain ATCC 700893 / DSM 11879 / JCM 9820 / NBRC 100138 / K1)).